A 392-amino-acid polypeptide reads, in one-letter code: L-rhamnonate dehydratase (392 aa).

2 residues coordinate substrate: His-22 and Arg-48. 3 residues coordinate Mg(2+): Asp-214, Glu-240, and Glu-268. Residue His-318 is the Proton acceptor of the active site. Glu-338 provides a ligand contact to substrate.

It belongs to the mandelate racemase/muconate lactonizing enzyme family. RhamD subfamily. Homooctamer; tetramer of dimers. The cofactor is Mg(2+).

The catalysed reaction is L-rhamnonate = 2-dehydro-3-deoxy-L-rhamnonate + H2O. Functionally, catalyzes the dehydration of L-rhamnonate to 2-keto-3-deoxy-L-rhamnonate (KDR). The polypeptide is L-rhamnonate dehydratase (Paraburkholderia phymatum (strain DSM 17167 / CIP 108236 / LMG 21445 / STM815) (Burkholderia phymatum)).